Reading from the N-terminus, the 314-residue chain is Protein EXORDIUM (314 aa).

A signal peptide spans 1–21 (MYLLVFKLFLFLSLLQISVSA).

Belongs to the EXORDIUM family. As to expression, expressed in root tips, vascular tissue of roots, shoot apex, rosette leaves and embryos.

The protein localises to the secreted. Its subcellular location is the extracellular space. It is found in the apoplast. Required for cell expansion in leaves. May mediate brassinosteroid (BR)-induced leaf growth. May play a role in the control of BR responses in roots. May be involved in signaling processes that coordinate BR responses with environmental or developmental signals. The chain is Protein EXORDIUM (EXO) from Arabidopsis thaliana (Mouse-ear cress).